The following is a 188-amino-acid chain: Protein CRIPTO3 (188 aa).

One can recognise an EGF-like domain in the interval 78 to 107 (LNRTCCLNGGTCMLESFCACPPSFYGRNCE). A glycan (N-linked (GlcNAc...) asparagine) is linked at Asn79. Cystine bridges form between Cys82/Cys89, Cys83/Cys95, Cys97/Cys106, Cys115/Cys133, Cys128/Cys149, and Cys131/Cys140.

Belongs to the EGF-CFC (Cripto-1/FRL1/Cryptic) family. Expressed weakly in lung, colon and breast. Expressed also strongly in primary cancer tissues; lung and colon cancers.

The protein localises to the cell membrane. Could play a role in the determination of the epiblastic cells that subsequently give rise to the mesoderm. Activates the Nodal-dependent signaling pathway. The polypeptide is Protein CRIPTO3 (Homo sapiens (Human)).